The primary structure comprises 147 residues: 3-hydroxyacyl-[acyl-carrier-protein] dehydratase FabZ (147 aa).

H48 is a catalytic residue.

The protein belongs to the thioester dehydratase family. FabZ subfamily.

Its subcellular location is the cytoplasm. The enzyme catalyses a (3R)-hydroxyacyl-[ACP] = a (2E)-enoyl-[ACP] + H2O. Involved in unsaturated fatty acids biosynthesis. Catalyzes the dehydration of short chain beta-hydroxyacyl-ACPs and long chain saturated and unsaturated beta-hydroxyacyl-ACPs. The polypeptide is 3-hydroxyacyl-[acyl-carrier-protein] dehydratase FabZ (Aliarcobacter butzleri (strain RM4018) (Arcobacter butzleri)).